A 485-amino-acid chain; its full sequence is MNDSITVRGKDRYKSGVMEYKKMGYWEPDYVPKDTDVIALFRVTPQDGVDPIEASAAVAGESSTATWTVVWTDRLTAAEKYRAKCYRVDPVPNSPGQYFAYIAYDLDLFENGSIANLSASIIGNVFGFKPLKALRLEDMRLPIAYVKTFQGPATGIVVERERMDKFGRPLLGATVKPKLGLSGRNYGRVVYEALKGGLDFTKDDENINSQPFMHWRERFLYCMEAVNKAQAASGEIKGTYLNVTAGTMEEMYERAEFAKQLGSVIIMIDLVIGYTAIQSMAKWARRNDMILHLHRAGHSTYTRQRNHGVSFRVIAKWMRLAGVDHIHAGTVVGKLEGDPSTTKGYYDICREDYNPANLEHGLFFDQPWASLNKLMPVASGGIHAGQMHQLLDLLGEDVVLQFGGGTIGHPMGIAAGATANRVALEAMILARNEGRDYVHEGPEILAKAAQTCTPLKAALDTWKNVSFNYESTDTPDYAPTPSVSM.

Residues N124 and T174 each coordinate substrate. K176 (proton acceptor) is an active-site residue. Residue K178 participates in substrate binding. Mg(2+) is bound by residues K202, D204, and E205. At K202 the chain carries N6-carboxylysine. H294 acts as the Proton acceptor in catalysis. The substrate site is built by R295, H327, and S379.

This sequence belongs to the RuBisCO large chain family. Type I subfamily. Heterohexadecamer of 8 large chains and 8 small chains. Requires Mg(2+) as cofactor.

The enzyme catalyses 2 (2R)-3-phosphoglycerate + 2 H(+) = D-ribulose 1,5-bisphosphate + CO2 + H2O. It catalyses the reaction D-ribulose 1,5-bisphosphate + O2 = 2-phosphoglycolate + (2R)-3-phosphoglycerate + 2 H(+). Functionally, ruBisCO catalyzes two reactions: the carboxylation of D-ribulose 1,5-bisphosphate, the primary event in carbon dioxide fixation, as well as the oxidative fragmentation of the pentose substrate. Both reactions occur simultaneously and in competition at the same active site. The chain is Ribulose bisphosphate carboxylase large chain 2 from Rhodopseudomonas palustris (strain BisB5).